Consider the following 101-residue polypeptide: MAKKSSIEKNNRRKRMTGNAAAKRARLKTIIADKTKPMEERFAATLKLAEMPRNSSATRIRNRCELTGRPRSNYRKTKLSRIALRDLGSRGLVPGLVKSSW.

Over residues 1-10 (MAKKSSIEKN) the composition is skewed to basic and acidic residues. A disordered region spans residues 1–23 (MAKKSSIEKNNRRKRMTGNAAAK).

Belongs to the universal ribosomal protein uS14 family. In terms of assembly, part of the 30S ribosomal subunit. Contacts proteins S3 and S10.

Binds 16S rRNA, required for the assembly of 30S particles and may also be responsible for determining the conformation of the 16S rRNA at the A site. The polypeptide is Small ribosomal subunit protein uS14 (Nitrobacter hamburgensis (strain DSM 10229 / NCIMB 13809 / X14)).